Here is a 273-residue protein sequence, read N- to C-terminus: WAP four-disulfide core domain protein 8 (273 aa).

A helical transmembrane segment spans residues 45–65 (LAHSWWSGALLLLLLFLFLSL). Residues 76–123 (IKQKVGECPRQRLECRNESLSSCKTDFNCKAHFKCCQFACGRKCMDPY) enclose the WAP 1 domain. 15 cysteine pairs are disulfide-bonded: cysteine 83-cysteine 111, cysteine 90-cysteine 115, cysteine 98-cysteine 110, cysteine 104-cysteine 119, cysteine 127-cysteine 177, cysteine 136-cysteine 160, cysteine 152-cysteine 173, cysteine 186-cysteine 214, cysteine 197-cysteine 218, cysteine 201-cysteine 213, cysteine 207-cysteine 222, cysteine 233-cysteine 261, cysteine 240-cysteine 264, cysteine 248-cysteine 260, and cysteine 254-cysteine 268. Residues 127 to 177 (CMLPSDKGNCQDILTRWYFDSQKHQCRAFLYSGCRGNANNFLTKTDCRNAC) form the BPTI/Kunitz inhibitor domain. WAP domains follow at residues 179-226 (FVEK…ARVW) and 228-272 (VKTG…LKPR).

The protein resides in the membrane. In Mus musculus (Mouse), this protein is WAP four-disulfide core domain protein 8 (Wfdc8).